Reading from the N-terminus, the 344-residue chain is Putative replication factor C small subunit L499 (344 aa).

57–64 (GPSGSGKT) is a binding site for ATP.

Belongs to the activator 1 small subunits family. RfcS subfamily.

Functionally, part of the RFC clamp loader complex which loads the PCNA sliding clamp onto DNA. The sequence is that of Putative replication factor C small subunit L499 from Acanthamoeba polyphaga mimivirus (APMV).